The chain runs to 416 residues: Creatine kinase U-type, mitochondrial (416 aa).

The transit peptide at 1-39 (MAGPFSRLLSARPGLRLLALAGAGSLAAGFLLRPEPIRA) directs the protein to the mitochondrion. The segment at 40-63 (ASERRRQYPPSAEYPDLRKHNNCM) is cardiolipin-binding. The 88-residue stretch at 44 to 131 (RRQYPPSAEY…FDPVIQERHN (88 aa)) folds into the Phosphagen kinase N-terminal domain. Ser151 carries the post-translational modification Phosphoserine. In terms of domain architecture, Phosphagen kinase C-terminal spans 158-400 (YVLSSRVRTG…NYLIDCERRL (243 aa)). 161–165 (SSRVR) contacts ATP. Ser196 is subject to Phosphoserine. Residue Thr213 is modified to Phosphothreonine. Residue His224 coordinates ATP. Ser232 is modified (phosphoserine). ATP is bound by residues Arg269, Arg325, and 353 to 358 (RGTGGV). Residue Thr355 is modified to Phosphothreonine. Ser365 bears the Phosphoserine mark. Residue Asp368 coordinates ATP.

The protein belongs to the ATP:guanido phosphotransferase family. Exists as an octamer composed of four MTCK homodimers.

Its subcellular location is the mitochondrion inner membrane. It catalyses the reaction creatine + ATP = N-phosphocreatine + ADP + H(+). Functionally, reversibly catalyzes the transfer of phosphate between ATP and various phosphogens (e.g. creatine phosphate). Creatine kinase isoenzymes play a central role in energy transduction in tissues with large, fluctuating energy demands, such as skeletal muscle, heart, brain and spermatozoa. This Sus scrofa (Pig) protein is Creatine kinase U-type, mitochondrial (CKMT1).